The primary structure comprises 122 residues: Large ribosomal subunit protein uL14 (122 aa).

Belongs to the universal ribosomal protein uL14 family. As to quaternary structure, part of the 50S ribosomal subunit. Forms a cluster with proteins L3 and L19. In the 70S ribosome, L14 and L19 interact and together make contacts with the 16S rRNA in bridges B5 and B8.

Binds to 23S rRNA. Forms part of two intersubunit bridges in the 70S ribosome. The chain is Large ribosomal subunit protein uL14 from Bradyrhizobium sp. (strain BTAi1 / ATCC BAA-1182).